The following is a 91-amino-acid chain: DNA-binding protein HU (91 aa).

Belongs to the bacterial histone-like protein family.

Histone-like DNA-binding protein which is capable of wrapping DNA to stabilize it, and thus to prevent its denaturation under extreme environmental conditions. Also seems to act as a fortuitous virulence factor in delayed sequelae by binding to heparan sulfate-proteoglycans in the extracellular matrix of target organs and acting as a nidus for in situ immune complex formation. The protein is DNA-binding protein HU (hup) of Streptococcus mutans serotype c (strain ATCC 700610 / UA159).